The chain runs to 915 residues: Protein SLFN14 (915 aa).

Over residues 157–167 (AAQRGRRRLHP) the composition is skewed to basic residues. Residues 157–176 (AAQRGRRRLHPPRASNSNLQ) are disordered. Positions 204-389 (ESTHVEFKRF…KVLEFKGALQ (186 aa)) are required for endoribonuclease activity. A required for ribosome binding region spans residues 390 to 569 (RHLFPVTQKT…QLGCEFFNLL (180 aa)).

Associates with ribosomes in an ATP-independent manner. It depends on Mg(2+) as a cofactor. Mn(2+) serves as cofactor. Detected in reticulocytes (at protein level).

The protein resides in the nucleus. Shows no ribosome-associated and endoribonuclease activities. In terms of biological role, displays polysome-associated endoribonuclease activity towards mRNAs and rRNAs. May play a role in RNA surveillance pathways by recognizing stalled ribosomes and triggering endonucleolytic cleavage of aberrant mRNAs. Cleaves RNAs in a magnesium-, manganese-dependent and ATP-independent manner. Involved in correct maturation of megakaryocytes and especially important for proplatelet extension. The chain is Protein SLFN14 from Oryctolagus cuniculus (Rabbit).